The chain runs to 521 residues: MKTRCFCLAAFSGILTTLAIPNEIKETGYSILGFVAYVPLFIALNKLEDKKALMGLTVFYFIIANSLQNFWLGFFHAFGWITFIGVIIGYIPYSLTLGYFLYYSLKSFKNKTMSITMLFTFYDYSRSIGFLAYPWGLAAFTVNNFNNLIQIADIFGVFFVSFAVYFLNSGIADFLIHKNKTNLLNIAFPTLLITASFTYGMIKKIELKNLLAKEIDSLNIAAIQLNTDPWLPGNDKKGIRDSIEITEQALKENPKIEFVIWSEGVLTYPFSKEDQHFKSSDLHNELKNFIKEHKIPFAIGAPSNLDKAIGIQQNSIYMVEPNLNITNIYSKIFLVPFAEKIPFYEYKFVRNFFLKNFRILGQIEGNKIEILKLKKFKFAPLICYDDAFPELSRFYKTQGANILVNFSNDSWSKTNSAEWQHFVVAKFRSIENGIKTIRATNSGITATINEYGETIKKLETFKKGYLLSTVKLSPTFTTIYEKIGDSFIHILVMMFLITTLRFQFMEDKNQLLSSSVVKIKV.

A run of 5 helical transmembrane segments spans residues Ile-24–Leu-44, Trp-71–Ile-91, Ile-128–Leu-148, Ile-151–Ile-171, and Asn-182–Ile-202. The CN hydrolase domain maps to Leu-218–Leu-472. The active-site Proton acceptor is Glu-263. Lys-331 is a catalytic residue. The active-site Nucleophile is Cys-383.

The protein belongs to the CN hydrolase family. Apolipoprotein N-acyltransferase subfamily.

The protein resides in the cell inner membrane. It catalyses the reaction N-terminal S-1,2-diacyl-sn-glyceryl-L-cysteinyl-[lipoprotein] + a glycerophospholipid = N-acyl-S-1,2-diacyl-sn-glyceryl-L-cysteinyl-[lipoprotein] + a 2-acyl-sn-glycero-3-phospholipid + H(+). It functions in the pathway protein modification; lipoprotein biosynthesis (N-acyl transfer). Catalyzes the phospholipid dependent N-acylation of the N-terminal cysteine of apolipoprotein, the last step in lipoprotein maturation. The protein is Apolipoprotein N-acyltransferase of Borreliella burgdorferi (strain ATCC 35210 / DSM 4680 / CIP 102532 / B31) (Borrelia burgdorferi).